The primary structure comprises 160 residues: V-type proton ATPase subunit c (160 aa).

Residues 1 to 8 (MTELCPVY) are Vacuolar-facing. The helical transmembrane segment at 9-31 (APFFGAIGCASAIIFTSLGAAYG) threads the bilayer. The Cytoplasmic portion of the chain corresponds to 32-53 (TAKSGVGICATCVLRPDLLFKN). The chain crosses the membrane as a helical span at residues 54-74 (IVPVIMAGIIAIYGLVVSVLV). Residues 75 to 90 (CYSLGQKQALYTGFIQ) lie on the Vacuolar side of the membrane. A helical membrane pass occupies residues 91 to 112 (LGAGLSVGLSGLAAGFAIGIVG). Residues 113–124 (DAGVRGSSQQPR) lie on the Cytoplasmic side of the membrane. Residues 125-150 (LFVGMILILIFAEVLGLYGLIVALLL) form a helical membrane-spanning segment. The Vacuolar portion of the chain corresponds to 151–160 (NSRATQDVVC).

Belongs to the V-ATPase proteolipid subunit family. As to quaternary structure, V-ATPase is a heteromultimeric enzyme composed of a peripheral catalytic V1 complex (components A to H) attached to an integral membrane V0 proton pore complex (components: a, c, c', c'', d, e, f and VOA1). The decameric c-ring forms the proton-conducting pore, and is composed of eight proteolipid subunits c, one subunit c' and one subunit c''.

Its subcellular location is the vacuole membrane. Proton-conducting pore forming subunit of the V0 complex of vacuolar(H+)-ATPase (V-ATPase), a multisubunit enzyme composed of a peripheral complex (V1) that hydrolyzes ATP and a membrane integral complex (V0) that translocates protons. V-ATPase is responsible for acidifying and maintaining the pH of intracellular compartments. The sequence is that of V-type proton ATPase subunit c (VMA3) from Saccharomyces cerevisiae (strain ATCC 204508 / S288c) (Baker's yeast).